Reading from the N-terminus, the 292-residue chain is 4-diphosphocytidyl-2-C-methyl-D-erythritol kinase (292 aa).

Lysine 20 is an active-site residue. 103 to 113 (PMGGGIGGGSS) contacts ATP. Aspartate 145 is an active-site residue.

It belongs to the GHMP kinase family. IspE subfamily.

It catalyses the reaction 4-CDP-2-C-methyl-D-erythritol + ATP = 4-CDP-2-C-methyl-D-erythritol 2-phosphate + ADP + H(+). The protein operates within isoprenoid biosynthesis; isopentenyl diphosphate biosynthesis via DXP pathway; isopentenyl diphosphate from 1-deoxy-D-xylulose 5-phosphate: step 3/6. In terms of biological role, catalyzes the phosphorylation of the position 2 hydroxy group of 4-diphosphocytidyl-2C-methyl-D-erythritol. The polypeptide is 4-diphosphocytidyl-2-C-methyl-D-erythritol kinase (Cupriavidus metallidurans (strain ATCC 43123 / DSM 2839 / NBRC 102507 / CH34) (Ralstonia metallidurans)).